The chain runs to 34 residues: Endoglucanase 1 (34 aa).

It catalyses the reaction Endohydrolysis of (1-&gt;4)-beta-D-glucosidic linkages in cellulose, lichenin and cereal beta-D-glucans.. This chain is Endoglucanase 1, found in Sclerotinia sclerotiorum (White mold).